Here is a 452-residue protein sequence, read N- to C-terminus: Phosphoglucosamine mutase (452 aa).

Ser-104 acts as the Phosphoserine intermediate in catalysis. Mg(2+) contacts are provided by Ser-104, Asp-246, Asp-248, and Asp-250. Ser-104 carries the post-translational modification Phosphoserine.

The protein belongs to the phosphohexose mutase family. Mg(2+) serves as cofactor. Post-translationally, activated by phosphorylation.

The enzyme catalyses alpha-D-glucosamine 1-phosphate = D-glucosamine 6-phosphate. In terms of biological role, catalyzes the conversion of glucosamine-6-phosphate to glucosamine-1-phosphate. The sequence is that of Phosphoglucosamine mutase from Streptomyces avermitilis (strain ATCC 31267 / DSM 46492 / JCM 5070 / NBRC 14893 / NCIMB 12804 / NRRL 8165 / MA-4680).